The sequence spans 355 residues: DNA-directed RNA polymerase subunit alpha (355 aa).

Residues 1–233 form an alpha N-terminal domain (alpha-NTD) region; that stretch reads MVREKVRVST…DLFIPFLHKE (233 aa). The segment at 268–355 is alpha C-terminal domain (alpha-CTD); that stretch reads KKKIALKSIF…EIYCYSIFFH (88 aa).

This sequence belongs to the RNA polymerase alpha chain family. In terms of assembly, in plastids the minimal PEP RNA polymerase catalytic core is composed of four subunits: alpha, beta, beta', and beta''. When a (nuclear-encoded) sigma factor is associated with the core the holoenzyme is formed, which can initiate transcription.

It is found in the plastid. The protein localises to the chloroplast. It catalyses the reaction RNA(n) + a ribonucleoside 5'-triphosphate = RNA(n+1) + diphosphate. In terms of biological role, DNA-dependent RNA polymerase catalyzes the transcription of DNA into RNA using the four ribonucleoside triphosphates as substrates. This chain is DNA-directed RNA polymerase subunit alpha, found in Jasminum nudiflorum (Winter jasmine).